The primary structure comprises 281 residues: Aliphatic sulfonates import ATP-binding protein SsuB (281 aa).

An ABC transporter domain is found at 40 to 263; that stretch reads LDIRGLRKSF…QRGSAELAAL (224 aa). 72 to 79 is an ATP binding site; the sequence is GRSGCGKS.

Belongs to the ABC transporter superfamily. Aliphatic sulfonates importer (TC 3.A.1.17.2) family. As to quaternary structure, the complex is composed of two ATP-binding proteins (SsuB), two transmembrane proteins (SsuC) and a solute-binding protein (SsuA).

It localises to the cell inner membrane. The catalysed reaction is ATP + H2O + aliphatic sulfonate-[sulfonate-binding protein]Side 1 = ADP + phosphate + aliphatic sulfonateSide 2 + [sulfonate-binding protein]Side 1.. Functionally, part of the ABC transporter complex SsuABC involved in aliphatic sulfonates import. Responsible for energy coupling to the transport system. The sequence is that of Aliphatic sulfonates import ATP-binding protein SsuB from Rhodopseudomonas palustris (strain ATCC BAA-98 / CGA009).